The following is a 47-amino-acid chain: Conotoxin reg3.11 (47 aa).

A propeptide spanning residues 1-31 (DQPVERHAENKRHLIPAVMRAMTMNADRRVQ) is cleaved from the precursor. 3 cysteine pairs are disulfide-bonded: C32/C44, C33/C42, and C38/C45. Positions 46–47 (YH) are excised as a propeptide.

This sequence belongs to the conotoxin M superfamily. As to expression, expressed by the venom duct.

The protein resides in the secreted. The polypeptide is Conotoxin reg3.11 (Conus regius (Crown cone)).